Consider the following 661-residue polypeptide: Lateral signaling target protein 2 (661 aa).

The disordered stretch occupies residues 294 to 432 (VPEDTSSTLT…SDDEITDDVQ (139 aa)). Positions 297-310 (DTSSTLTMSDFRTN) are enriched in polar residues. Composition is skewed to low complexity over residues 330 to 360 (SDST…SPHS) and 381 to 393 (TNSN…TESP). The span at 394–411 (ETIEEPDNVDMEESSESE) shows a compositional bias: acidic residues. A compositionally biased stretch (basic and acidic residues) spans 412-422 (VDTHIDETRNE). The FYVE-type zinc-finger motif lies at 566–626 (DEDCEQCTAC…VCNLCYVHRL (61 aa)). Residues cysteine 572, cysteine 575, cysteine 588, cysteine 591, cysteine 596, cysteine 599, cysteine 618, and cysteine 621 each contribute to the Zn(2+) site. The span at 641–650 (NGATVPSVTE) shows a compositional bias: polar residues. The tract at residues 641–661 (NGATVPSVTEQQSAQTASASS) is disordered. A compositionally biased stretch (low complexity) spans 651 to 661 (QQSAQTASASS).

It belongs to the lst-2 family. As to expression, expressed in vulval precursor cells (VPCs).

In terms of biological role, negative regulator of epidermal growth factor receptor (EGFR) signaling. In Caenorhabditis elegans, this protein is Lateral signaling target protein 2 (lst-2).